The primary structure comprises 658 residues: UvrABC system protein B (658 aa).

Residues 26-414 (AGLKKGLKHQ…PDVIEQIIRP (389 aa)) enclose the Helicase ATP-binding domain. 39–46 (GATGTGKT) serves as a coordination point for ATP. The Beta-hairpin motif lies at 92 to 115 (YYDYYQPEAYVPQSDTYIEKDASI). One can recognise a Helicase C-terminal domain in the interval 430 to 592 (QIDDLMDEIN…ITPKTIRKEI (163 aa)). A UVR domain is found at 622-658 (DIFIEGMEHEMKEAAKALDFERAAELRDALLEIKAEG).

This sequence belongs to the UvrB family. Forms a heterotetramer with UvrA during the search for lesions. Interacts with UvrC in an incision complex.

It is found in the cytoplasm. Functionally, the UvrABC repair system catalyzes the recognition and processing of DNA lesions. A damage recognition complex composed of 2 UvrA and 2 UvrB subunits scans DNA for abnormalities. Upon binding of the UvrA(2)B(2) complex to a putative damaged site, the DNA wraps around one UvrB monomer. DNA wrap is dependent on ATP binding by UvrB and probably causes local melting of the DNA helix, facilitating insertion of UvrB beta-hairpin between the DNA strands. Then UvrB probes one DNA strand for the presence of a lesion. If a lesion is found the UvrA subunits dissociate and the UvrB-DNA preincision complex is formed. This complex is subsequently bound by UvrC and the second UvrB is released. If no lesion is found, the DNA wraps around the other UvrB subunit that will check the other stand for damage. The chain is UvrABC system protein B from Listeria innocua serovar 6a (strain ATCC BAA-680 / CLIP 11262).